The following is a 160-amino-acid chain: 2-C-methyl-D-erythritol 2,4-cyclodiphosphate synthase (160 aa).

A divalent metal cation is bound by residues aspartate 10 and histidine 12. Residues 10 to 12 (DVH) and 36 to 37 (HS) each bind 4-CDP-2-C-methyl-D-erythritol 2-phosphate. Histidine 44 lines the a divalent metal cation pocket. 4-CDP-2-C-methyl-D-erythritol 2-phosphate contacts are provided by residues 58–60 (DIG), 63–67 (FPDTD), and arginine 144.

It belongs to the IspF family. Homotrimer. It depends on a divalent metal cation as a cofactor.

The catalysed reaction is 4-CDP-2-C-methyl-D-erythritol 2-phosphate = 2-C-methyl-D-erythritol 2,4-cyclic diphosphate + CMP. It functions in the pathway isoprenoid biosynthesis; isopentenyl diphosphate biosynthesis via DXP pathway; isopentenyl diphosphate from 1-deoxy-D-xylulose 5-phosphate: step 4/6. Its function is as follows. Involved in the biosynthesis of isopentenyl diphosphate (IPP) and dimethylallyl diphosphate (DMAPP), two major building blocks of isoprenoid compounds. Catalyzes the conversion of 4-diphosphocytidyl-2-C-methyl-D-erythritol 2-phosphate (CDP-ME2P) to 2-C-methyl-D-erythritol 2,4-cyclodiphosphate (ME-CPP) with a corresponding release of cytidine 5-monophosphate (CMP). The protein is 2-C-methyl-D-erythritol 2,4-cyclodiphosphate synthase of Dechloromonas aromatica (strain RCB).